Here is a 614-residue protein sequence, read N- to C-terminus: Dihydroxy-acid dehydratase (614 aa).

Residue Asp81 participates in Mg(2+) binding. [2Fe-2S] cluster is bound at residue Cys122. Mg(2+) is bound by residues Asp123 and Lys124. The residue at position 124 (Lys124) is an N6-carboxylysine. Cys193 contributes to the [2Fe-2S] cluster binding site. Glu489 is a binding site for Mg(2+). The Proton acceptor role is filled by Ser515.

The protein belongs to the IlvD/Edd family. In terms of assembly, homodimer. It depends on [2Fe-2S] cluster as a cofactor. Mg(2+) is required as a cofactor.

The catalysed reaction is (2R)-2,3-dihydroxy-3-methylbutanoate = 3-methyl-2-oxobutanoate + H2O. The enzyme catalyses (2R,3R)-2,3-dihydroxy-3-methylpentanoate = (S)-3-methyl-2-oxopentanoate + H2O. It participates in amino-acid biosynthesis; L-isoleucine biosynthesis; L-isoleucine from 2-oxobutanoate: step 3/4. Its pathway is amino-acid biosynthesis; L-valine biosynthesis; L-valine from pyruvate: step 3/4. Functionally, functions in the biosynthesis of branched-chain amino acids. Catalyzes the dehydration of (2R,3R)-2,3-dihydroxy-3-methylpentanoate (2,3-dihydroxy-3-methylvalerate) into 2-oxo-3-methylpentanoate (2-oxo-3-methylvalerate) and of (2R)-2,3-dihydroxy-3-methylbutanoate (2,3-dihydroxyisovalerate) into 2-oxo-3-methylbutanoate (2-oxoisovalerate), the penultimate precursor to L-isoleucine and L-valine, respectively. The chain is Dihydroxy-acid dehydratase from Saccharophagus degradans (strain 2-40 / ATCC 43961 / DSM 17024).